We begin with the raw amino-acid sequence, 134 residues long: Cytochrome b (134 aa).

The next 3 membrane-spanning stretches (helical) occupy residues 33–53, 77–98, and 113–133; these read FGSL…FLAM, WLIR…FLHV, and WNIG…GYVL. Residues His-83 and His-97 each coordinate heme b.

The protein belongs to the cytochrome b family. In terms of assembly, the cytochrome bc1 complex contains 11 subunits: 3 respiratory subunits (MT-CYB, CYC1 and UQCRFS1), 2 core proteins (UQCRC1 and UQCRC2) and 6 low-molecular weight proteins (UQCRH/QCR6, UQCRB/QCR7, UQCRQ/QCR8, UQCR10/QCR9, UQCR11/QCR10 and a cleavage product of UQCRFS1). This cytochrome bc1 complex then forms a dimer. Heme b serves as cofactor.

It is found in the mitochondrion inner membrane. In terms of biological role, component of the ubiquinol-cytochrome c reductase complex (complex III or cytochrome b-c1 complex) that is part of the mitochondrial respiratory chain. The b-c1 complex mediates electron transfer from ubiquinol to cytochrome c. Contributes to the generation of a proton gradient across the mitochondrial membrane that is then used for ATP synthesis. The polypeptide is Cytochrome b (MT-CYB) (Sorex shinto sadonis (Sado shrew)).